Here is a 186-residue protein sequence, read N- to C-terminus: Peptidyl-tRNA hydrolase (186 aa).

Residue Tyr14 participates in tRNA binding. Catalysis depends on His19, which acts as the Proton acceptor. TRNA-binding residues include Tyr61, Asn63, and Asn107.

The protein belongs to the PTH family. As to quaternary structure, monomer.

It localises to the cytoplasm. It catalyses the reaction an N-acyl-L-alpha-aminoacyl-tRNA + H2O = an N-acyl-L-amino acid + a tRNA + H(+). In terms of biological role, hydrolyzes ribosome-free peptidyl-tRNAs (with 1 or more amino acids incorporated), which drop off the ribosome during protein synthesis, or as a result of ribosome stalling. Functionally, catalyzes the release of premature peptidyl moieties from peptidyl-tRNA molecules trapped in stalled 50S ribosomal subunits, and thus maintains levels of free tRNAs and 50S ribosomes. The sequence is that of Peptidyl-tRNA hydrolase from Helicobacter pylori (strain HPAG1).